The following is a 228-amino-acid chain: Phosphoribosylformylglycinamidine synthase subunit PurQ (228 aa).

The region spanning 3 to 226 (FAVIVFPGSN…VKYWRETHVV (224 aa)) is the Glutamine amidotransferase type-1 domain. Catalysis depends on C86, which acts as the Nucleophile. Catalysis depends on residues H195 and E197.

Part of the FGAM synthase complex composed of 1 PurL, 1 PurQ and 2 PurS subunits.

It localises to the cytoplasm. It carries out the reaction N(2)-formyl-N(1)-(5-phospho-beta-D-ribosyl)glycinamide + L-glutamine + ATP + H2O = 2-formamido-N(1)-(5-O-phospho-beta-D-ribosyl)acetamidine + L-glutamate + ADP + phosphate + H(+). The catalysed reaction is L-glutamine + H2O = L-glutamate + NH4(+). It participates in purine metabolism; IMP biosynthesis via de novo pathway; 5-amino-1-(5-phospho-D-ribosyl)imidazole from N(2)-formyl-N(1)-(5-phospho-D-ribosyl)glycinamide: step 1/2. In terms of biological role, part of the phosphoribosylformylglycinamidine synthase complex involved in the purines biosynthetic pathway. Catalyzes the ATP-dependent conversion of formylglycinamide ribonucleotide (FGAR) and glutamine to yield formylglycinamidine ribonucleotide (FGAM) and glutamate. The FGAM synthase complex is composed of three subunits. PurQ produces an ammonia molecule by converting glutamine to glutamate. PurL transfers the ammonia molecule to FGAR to form FGAM in an ATP-dependent manner. PurS interacts with PurQ and PurL and is thought to assist in the transfer of the ammonia molecule from PurQ to PurL. This chain is Phosphoribosylformylglycinamidine synthase subunit PurQ, found in Geobacillus sp. (strain WCH70).